Reading from the N-terminus, the 126-residue chain is Cornifin alpha (126 aa).

An N-acetylserine modification is found at serine 2. 13 tandem repeats follow at residues 3-14, 18-29, 31-38, 39-46, 47-54, 55-62, 63-70, 71-78, 79-86, 87-94, 95-102, 103-110, and 111-118. The tract at residues 3–29 is 2 X 12 AA approximate repeats; the sequence is SQQQKQPCTLPPQLQQHQVKQPCQPPP. A disordered region spans residues 20-43; sequence QVKQPCQPPPQEPCVPKTKEPCQP. The tract at residues 31–122 is 11 X 8 AA approximate tandem repeats; that stretch reads EPCVPKTKEP…CQPKVPEPCQ (92 aa). Positions 104–126 are disordered; it reads PCQSKVPQPCQPKVPEPCQTKQK.

Belongs to the cornifin (SPRR) family. In terms of tissue distribution, suprabasal layers of squamous-differentiated tissues such as epidermis, esophagus, tongue and trachea.

It is found in the cytoplasm. In terms of biological role, cross-linked envelope protein of keratinocytes. It is a keratinocyte protein that first appears in the cell cytosol, but ultimately becomes cross-linked to membrane proteins by transglutaminase. All that results in the formation of an insoluble envelope beneath the plasma membrane. The protein is Cornifin alpha of Oryctolagus cuniculus (Rabbit).